The chain runs to 444 residues: Alpha-1,3-mannosyl-glycoprotein 2-beta-N-acetylglucosaminyltransferase (444 aa).

Residues 1-6 (MARISC) lie on the Cytoplasmic side of the membrane. Residues 7–24 (DLRFLLIPAAFMFIYIQM) traverse the membrane as a helical; Signal-anchor for type II membrane protein segment. At 25-444 (RLFQTQSQYA…SVMQLGIRNS (420 aa)) the chain is on the lumenal side. The stretch at 61-92 (KQSRIVALEDMKNRQDEELVQLKDLIQTFEKK) forms a coiled coil. Residues Arg-115, Asp-144, His-188, and Asp-210 each contribute to the substrate site. Residue Asp-211 coordinates Mn(2+). The active-site Proton acceptor is the Asp-287. Position 318 (Ser-318) interacts with substrate. N-linked (GlcNAc...) asparagine glycosylation occurs at Asn-351.

Belongs to the glycosyltransferase 13 family. The cofactor is Mn(2+). Post-translationally, glycosylated. In terms of tissue distribution, expressed in roots, stems, leaves and flowers.

Its subcellular location is the golgi apparatus membrane. It catalyses the reaction N(4)-(alpha-D-Man-(1-&gt;3)-[alpha-D-Man-(1-&gt;3)-[alpha-D-Man-(1-&gt;6)]-alpha-D-Man-(1-&gt;6)]-beta-D-Man-(1-&gt;4)-beta-D-GlcNAc-(1-&gt;4)-beta-D-GlcNAc)-L-asparaginyl-[protein] (N-glucan mannose isomer 5A1,2) + UDP-N-acetyl-alpha-D-glucosamine = N(4)-{beta-D-GlcNAc-(1-&gt;2)-alpha-D-Man-(1-&gt;3)-[alpha-D-Man-(1-&gt;3)-[alpha-D-Man-(1-&gt;6)]-alpha-D-Man-(1-&gt;6)]-beta-D-Man-(1-&gt;4)-beta-D-GlcNAc-(1-&gt;4)-beta-D-GlcNAc}-L-asparaginyl-[protein] + UDP + H(+). Its pathway is protein modification; protein glycosylation. In terms of biological role, initiates complex N-linked carbohydrate formation. Essential for the conversion of high-mannose to hybrid and complex N-glycans. Required for normal root growth and morphology. The polypeptide is Alpha-1,3-mannosyl-glycoprotein 2-beta-N-acetylglucosaminyltransferase (Arabidopsis thaliana (Mouse-ear cress)).